The following is a 345-amino-acid chain: Myb/SANT-like DNA-binding domain-containing protein 4 (345 aa).

The region spanning 4–77 is the Myb-like domain; that stretch reads LKRKRKSNFS…EVKRRYLDWR (74 aa). Lys9 participates in a covalent cross-link: Glycyl lysine isopeptide (Lys-Gly) (interchain with G-Cter in SUMO2). Residue Ser106 is modified to Phosphoserine. Glycyl lysine isopeptide (Lys-Gly) (interchain with G-Cter in SUMO2) cross-links involve residues Lys114 and Lys142. Residues 143 to 175 are disordered; the sequence is VEEEERDPQSPEFEIEEEEEMLSSVIPDSRREN. At Thr188 the chain carries Phosphothreonine. Residues 203–345 are a coiled coil; that stretch reads LLVNIEKQKL…LRIQKEGHLQ (143 aa). Residues Lys237, Lys254, and Lys273 each participate in a glycyl lysine isopeptide (Lys-Gly) (interchain with G-Cter in SUMO2) cross-link.

The sequence is that of Myb/SANT-like DNA-binding domain-containing protein 4 (MSANTD4) from Homo sapiens (Human).